A 150-amino-acid polypeptide reads, in one-letter code: Large ribosomal subunit protein bL9 (150 aa).

The protein belongs to the bacterial ribosomal protein bL9 family.

Its function is as follows. Binds to the 23S rRNA. This Leuconostoc mesenteroides subsp. mesenteroides (strain ATCC 8293 / DSM 20343 / BCRC 11652 / CCM 1803 / JCM 6124 / NCDO 523 / NBRC 100496 / NCIMB 8023 / NCTC 12954 / NRRL B-1118 / 37Y) protein is Large ribosomal subunit protein bL9.